The sequence spans 439 residues: Phenylacetate-coenzyme A ligase (439 aa).

The protein belongs to the phenylacetyl-CoA ligase family. Monomer.

It carries out the reaction 2-phenylacetate + ATP + CoA = phenylacetyl-CoA + AMP + diphosphate. It participates in aromatic compound metabolism; phenylacetate degradation. Inhibited by divalent cations (zinc, copper, mercury) and by the sulfhydryl reagents 5,5-dithiobis(2-nitrobenzoic acid), N-ethylmaleimide and p-chloromercuribenzoate. Catalyzes the activation of phenylacetic acid (PA) to phenylacetyl-CoA (PA-CoA). Involved in the phenylalanine metabolism. Can also use CTP and UTP as substrate. The protein is Phenylacetate-coenzyme A ligase (paaK) of Pseudomonas putida (Arthrobacter siderocapsulatus).